The primary structure comprises 386 residues: Succinate--CoA ligase [ADP-forming] subunit beta (386 aa).

Residues 9-244 enclose the ATP-grasp domain; it reads KDLLTAYQLP…PSQENIRDVL (236 aa). ATP-binding positions include K46, 53–55, V102, and E107; that span reads GRG. Mg(2+)-binding residues include N199 and D213. Residues N264 and 321–323 contribute to the substrate site; that span reads GIM.

This sequence belongs to the succinate/malate CoA ligase beta subunit family. Heterotetramer of two alpha and two beta subunits. It depends on Mg(2+) as a cofactor.

The catalysed reaction is succinate + ATP + CoA = succinyl-CoA + ADP + phosphate. It catalyses the reaction GTP + succinate + CoA = succinyl-CoA + GDP + phosphate. Its pathway is carbohydrate metabolism; tricarboxylic acid cycle; succinate from succinyl-CoA (ligase route): step 1/1. Succinyl-CoA synthetase functions in the citric acid cycle (TCA), coupling the hydrolysis of succinyl-CoA to the synthesis of either ATP or GTP and thus represents the only step of substrate-level phosphorylation in the TCA. The beta subunit provides nucleotide specificity of the enzyme and binds the substrate succinate, while the binding sites for coenzyme A and phosphate are found in the alpha subunit. This is Succinate--CoA ligase [ADP-forming] subunit beta from Chlamydia trachomatis serovar L2 (strain ATCC VR-902B / DSM 19102 / 434/Bu).